We begin with the raw amino-acid sequence, 323 residues long: uncharacterized protein (323 aa).

2 helical membrane passes run 232 to 252 (LASYAGILMSGTGFLYMFIVL) and 267 to 287 (SLIVIQLLFSGIVLLILGVIG).

It belongs to the glycosyltransferase 2 family. GtrB subfamily.

The protein resides in the cell membrane. This is an uncharacterized protein from Bacillus subtilis (strain 168).